Reading from the N-terminus, the 401-residue chain is Chalcone synthase 3 (401 aa).

C168 is an active-site residue.

This sequence belongs to the thiolase-like superfamily. Chalcone/stilbene synthases family.

The catalysed reaction is (E)-4-coumaroyl-CoA + 3 malonyl-CoA + 3 H(+) = 2',4,4',6'-tetrahydroxychalcone + 3 CO2 + 4 CoA. It functions in the pathway secondary metabolite biosynthesis; flavonoid biosynthesis. In terms of biological role, the primary product of this enzyme is 4,2',4',6'-tetrahydroxychalcone (also termed naringenin-chalcone or chalcone) which can under specific conditions spontaneously isomerize into naringenin. This chain is Chalcone synthase 3 (CHS3), found in Sorghum bicolor (Sorghum).